The sequence spans 82 residues: ATP synthase subunit c (82 aa).

2 helical membrane passes run 7–27 (AASVVAAGLAVGLGAIGPGIG) and 57–77 (FAFMESLTIYGLVVALVLLFA).

This sequence belongs to the ATPase C chain family. F-type ATPases have 2 components, F(1) - the catalytic core - and F(0) - the membrane proton channel. F(1) has five subunits: alpha(3), beta(3), gamma(1), delta(1), epsilon(1). F(0) has four main subunits: a(1), b(1), b'(1) and c(10-14). The alpha and beta chains form an alternating ring which encloses part of the gamma chain. F(1) is attached to F(0) by a central stalk formed by the gamma and epsilon chains, while a peripheral stalk is formed by the delta, b and b' chains.

Its subcellular location is the cellular thylakoid membrane. F(1)F(0) ATP synthase produces ATP from ADP in the presence of a proton or sodium gradient. F-type ATPases consist of two structural domains, F(1) containing the extramembraneous catalytic core and F(0) containing the membrane proton channel, linked together by a central stalk and a peripheral stalk. During catalysis, ATP synthesis in the catalytic domain of F(1) is coupled via a rotary mechanism of the central stalk subunits to proton translocation. Functionally, key component of the F(0) channel; it plays a direct role in translocation across the membrane. A homomeric c-ring of between 10-14 subunits forms the central stalk rotor element with the F(1) delta and epsilon subunits. The chain is ATP synthase subunit c from Prochlorococcus marinus (strain NATL1A).